A 288-amino-acid chain; its full sequence is Glucose uptake protein GlcU (288 aa).

A run of 10 helical transmembrane segments spans residues 4–26 (LIAL…VGGG), 33–51 (GTTF…TGNA), 56–75 (LTII…GQGY), 82–104 (LIGV…TLFS), 114–136 (GVQV…LTSI), 148–170 (NFGK…VVVA), 180–197 (ALFF…ILSA), 206–225 (TLWN…FMFY), 230–252 (VGVA…GGIF), and 264–283 (IGIW…SEIL).

It belongs to the GRP transporter (TC 2.A.7.5) family.

The protein localises to the cell membrane. Involved in the uptake of glucose. The protein is Glucose uptake protein GlcU (glcU) of Staphylococcus xylosus.